The primary structure comprises 857 residues: Inactive rhomboid protein 1 (857 aa).

Residues 1 to 413 lie on the Cytoplasmic side of the membrane; the sequence is MAELRRDSTS…HRPFFTYWIT (413 aa). The tract at residues 283-307 is disordered; the sequence is FESPSDSTMKDVDSKQLDESELTGS. Residues 290–300 show a composition bias toward basic and acidic residues; it reads TMKDVDSKQLD. A helical membrane pass occupies residues 414-434; sequence FVHILITILAVCIYGIAPVGF. The Lumenal segment spans residues 435 to 661; sequence SQHETVDSVL…PDQFYRLWLS (227 aa). Residue N585 is glycosylated (N-linked (GlcNAc...) asparagine). A helical membrane pass occupies residues 662 to 682; it reads LFLHAGILHCLVSVCFQMTIL. Residues 683 to 693 lie on the Cytoplasmic side of the membrane; the sequence is RDLEKLAGWLR. A helical membrane pass occupies residues 694 to 714; that stretch reads ISIIYILSGITGNLASAIFLP. Residues 715–716 are Lumenal-facing; the sequence is YR. The helical transmembrane segment at 717–737 threads the bilayer; the sequence is AEVGPAGSQFGILACLFVELI. Topologically, residues 738-748 are cytoplasmic; it reads QSWQILAQPWR. The helical transmembrane segment at 749 to 769 threads the bilayer; sequence AFTKLLCVVLFLFAFGLLPWI. Residues 770 to 774 are Lumenal-facing; the sequence is DNFAH. The helical transmembrane segment at 775 to 795 threads the bilayer; the sequence is ISGFISGFFLSFAFLPYISFG. Over 796–805 the chain is Cytoplasmic; the sequence is RLDMYRKRCQ. The chain crosses the membrane as a helical span at residues 806–826; sequence IIIFLVVFLGLFAGLVVLFYV. The Lumenal segment spans residues 827–857; sequence HPIKCEWCELLTCIPFTDKFCEKYDLNAHLH.

It belongs to the peptidase S54 family.

Its subcellular location is the endoplasmic reticulum membrane. It is found in the golgi apparatus membrane. Its function is as follows. Regulates ADAM17 protease, a sheddase of the epidermal growth factor (EGF) receptor ligands and TNF, thereby plays a role in sleep, cell survival, proliferation, migration and inflammation. Does not exhibit any protease activity on its own. The protein is Inactive rhomboid protein 1 (rhbdf1) of Danio rerio (Zebrafish).